A 108-amino-acid polypeptide reads, in one-letter code: UPF0145 protein LJ_1287 (108 aa).

Belongs to the UPF0145 family.

This chain is UPF0145 protein LJ_1287, found in Lactobacillus johnsonii (strain CNCM I-12250 / La1 / NCC 533).